A 143-amino-acid chain; its full sequence is Large ribosomal subunit protein uL11 (143 aa).

Belongs to the universal ribosomal protein uL11 family. As to quaternary structure, part of the ribosomal stalk of the 50S ribosomal subunit. Interacts with L10 and the large rRNA to form the base of the stalk. L10 forms an elongated spine to which L12 dimers bind in a sequential fashion forming a multimeric L10(L12)X complex. In terms of processing, one or more lysine residues are methylated.

Its function is as follows. Forms part of the ribosomal stalk which helps the ribosome interact with GTP-bound translation factors. The chain is Large ribosomal subunit protein uL11 from Burkholderia mallei (strain NCTC 10247).